The chain runs to 560 residues: DNA ligase B (560 aa).

The active-site N6-AMP-lysine intermediate is the K124.

Belongs to the NAD-dependent DNA ligase family. LigB subfamily.

The enzyme catalyses NAD(+) + (deoxyribonucleotide)n-3'-hydroxyl + 5'-phospho-(deoxyribonucleotide)m = (deoxyribonucleotide)n+m + AMP + beta-nicotinamide D-nucleotide.. Catalyzes the formation of phosphodiester linkages between 5'-phosphoryl and 3'-hydroxyl groups in double-stranded DNA using NAD as a coenzyme and as the energy source for the reaction. This Escherichia coli O9:H4 (strain HS) protein is DNA ligase B.